A 679-amino-acid polypeptide reads, in one-letter code: Protein FAM178B (679 aa).

A disordered region spans residues 70 to 113; the sequence is PLDQGPRCPARRPCSPASAPAPTSPKKPKIQAPGETFPTDWSPP. The segment covering 75–90 has biased composition (low complexity); the sequence is PRCPARRPCSPASAPA.

The protein belongs to the FAM178 family.

This is Protein FAM178B from Homo sapiens (Human).